Here is a 383-residue protein sequence, read N- to C-terminus: E3 ubiquitin-protein ligase Os04g0590900 (383 aa).

A helical membrane pass occupies residues 53–73; sequence PVFSPLVIAIIGVLASAFLLV. Residues 105–129 are disordered; sequence GGAGSGGRHGHGQSRSHESWNVSPP. The RING-type; atypical zinc-finger motif lies at 157–199; it reads CSVCLGEFSDGESLRLLPRCSHAFHQQCIDTWLKSHSNCPLCR. 2 disordered regions span residues 269-291 and 320-383; these read EANG…SSFD and LLAG…DHPM.

It is found in the membrane. The catalysed reaction is S-ubiquitinyl-[E2 ubiquitin-conjugating enzyme]-L-cysteine + [acceptor protein]-L-lysine = [E2 ubiquitin-conjugating enzyme]-L-cysteine + N(6)-ubiquitinyl-[acceptor protein]-L-lysine.. It participates in protein modification; protein ubiquitination. Functionally, possesses E3 ubiquitin-protein ligase in vitro. The protein is E3 ubiquitin-protein ligase Os04g0590900 of Oryza sativa subsp. japonica (Rice).